A 263-amino-acid polypeptide reads, in one-letter code: Tryptophan synthase alpha chain (263 aa).

Catalysis depends on proton acceptor residues Glu49 and Asp60.

It belongs to the TrpA family. Tetramer of two alpha and two beta chains.

The enzyme catalyses (1S,2R)-1-C-(indol-3-yl)glycerol 3-phosphate + L-serine = D-glyceraldehyde 3-phosphate + L-tryptophan + H2O. Its pathway is amino-acid biosynthesis; L-tryptophan biosynthesis; L-tryptophan from chorismate: step 5/5. The alpha subunit is responsible for the aldol cleavage of indoleglycerol phosphate to indole and glyceraldehyde 3-phosphate. The polypeptide is Tryptophan synthase alpha chain (Clostridium kluyveri (strain NBRC 12016)).